Here is a 420-residue protein sequence, read N- to C-terminus: Gamma-glutamyl phosphate reductase (420 aa).

This sequence belongs to the gamma-glutamyl phosphate reductase family.

Its subcellular location is the cytoplasm. The enzyme catalyses L-glutamate 5-semialdehyde + phosphate + NADP(+) = L-glutamyl 5-phosphate + NADPH + H(+). The protein operates within amino-acid biosynthesis; L-proline biosynthesis; L-glutamate 5-semialdehyde from L-glutamate: step 2/2. In terms of biological role, catalyzes the NADPH-dependent reduction of L-glutamate 5-phosphate into L-glutamate 5-semialdehyde and phosphate. The product spontaneously undergoes cyclization to form 1-pyrroline-5-carboxylate. This chain is Gamma-glutamyl phosphate reductase, found in Neisseria meningitidis serogroup A / serotype 4A (strain DSM 15465 / Z2491).